Here is a 247-residue protein sequence, read N- to C-terminus: 1-(5-phosphoribosyl)-5-[(5-phosphoribosylamino)methylideneamino] imidazole-4-carboxamide isomerase (247 aa).

Catalysis depends on D8, which acts as the Proton acceptor. D131 serves as the catalytic Proton donor.

The protein belongs to the HisA/HisF family.

Its subcellular location is the cytoplasm. The catalysed reaction is 1-(5-phospho-beta-D-ribosyl)-5-[(5-phospho-beta-D-ribosylamino)methylideneamino]imidazole-4-carboxamide = 5-[(5-phospho-1-deoxy-D-ribulos-1-ylimino)methylamino]-1-(5-phospho-beta-D-ribosyl)imidazole-4-carboxamide. It functions in the pathway amino-acid biosynthesis; L-histidine biosynthesis; L-histidine from 5-phospho-alpha-D-ribose 1-diphosphate: step 4/9. This chain is 1-(5-phosphoribosyl)-5-[(5-phosphoribosylamino)methylideneamino] imidazole-4-carboxamide isomerase, found in Methylobacillus flagellatus (strain ATCC 51484 / DSM 6875 / VKM B-1610 / KT).